A 1449-amino-acid chain; its full sequence is Spike glycoprotein (1449 aa).

Residues 1 to 28 (MKKLFVVLVVMPLIYGDNFPCSKLTNRT) form the signal peptide. S1 stretches follow at residues 17 to 776 (DNFP…FYYY) and 29 to 776 (IGNH…FYYY). Topologically, residues 29–1390 (IGNHWNLIET…NRIETYVKWP (1362 aa)) are virion surface. The tract at residues 657-801 (VIYEEGDNIV…DSNDVDCEPV (145 aa)) is interaction with host ANPEP. The S2 stretch occupies residues 777-1449 (SIYNYTNDMT…YEPIEKVHIH (673 aa)). Positions 1022–1043 (AGGITLGALGGGAVAIPFAVAV) are fusion peptide. The segment at 1037–1156 (IPFAVAVQAR…HVDRLITGRL (120 aa)) is heptad repeat 1 (HR1). 2 coiled-coil regions span residues 1104–1148 (QDVV…DAHV) and 1338–1380 (TYLN…LEWL). The heptad repeat 2 (HR2) stretch occupies residues 1305–1402 (PDYIDINQTV…VWLLIGLVVI (98 aa)). A helical transmembrane segment spans residues 1391–1410 (WYVWLLIGLVVIFCIPLLLF). Over 1411–1449 (CCCSTGCCGCIGCLGSCCHSICSRRQFENYEPIEKVHIH) the chain is Intravirion. Positions 1445–1449 (KVHIH) match the KxHxx motif.

Belongs to the alphacoronaviruses spike protein family. Homotrimer. During virus morphogenesis, found in a complex with M and HE proteins. Interacts with host ANPEP.

The protein resides in the virion membrane. It is found in the host endoplasmic reticulum-Golgi intermediate compartment membrane. S1 region attaches the virion to the cell membrane by interacting with host ANPEP/aminopeptidase N, initiating the infection. Binding to the receptor probably induces conformational changes in the S glycoprotein unmasking the fusion peptide of S2 region and activating membranes fusion. S2 region belongs to the class I viral fusion protein. Under the current model, the protein has at least 3 conformational states: pre-fusion native state, pre-hairpin intermediate state, and post-fusion hairpin state. During viral and target cell membrane fusion, the coiled coil regions (heptad repeats) regions assume a trimer-of-hairpins structure, positioning the fusion peptide in close proximity to the C-terminal region of the ectodomain. The formation of this structure appears to drive apposition and subsequent fusion of viral and target cell membranes. The chain is Spike glycoprotein from Porcine transmissible gastroenteritis coronavirus (strain FS772/70) (TGEV).